A 425-amino-acid chain; its full sequence is Serine--tRNA ligase (425 aa).

Residue 231 to 233 (TAE) participates in L-serine binding. Residue 262-264 (RSE) coordinates ATP. Glu285 contacts L-serine. 349–352 (EISS) lines the ATP pocket. An L-serine-binding site is contributed by Ser385.

The protein belongs to the class-II aminoacyl-tRNA synthetase family. Type-1 seryl-tRNA synthetase subfamily. In terms of assembly, homodimer. The tRNA molecule binds across the dimer.

The protein resides in the cytoplasm. It catalyses the reaction tRNA(Ser) + L-serine + ATP = L-seryl-tRNA(Ser) + AMP + diphosphate + H(+). The enzyme catalyses tRNA(Sec) + L-serine + ATP = L-seryl-tRNA(Sec) + AMP + diphosphate + H(+). Its pathway is aminoacyl-tRNA biosynthesis; selenocysteinyl-tRNA(Sec) biosynthesis; L-seryl-tRNA(Sec) from L-serine and tRNA(Sec): step 1/1. Its function is as follows. Catalyzes the attachment of serine to tRNA(Ser). Is also able to aminoacylate tRNA(Sec) with serine, to form the misacylated tRNA L-seryl-tRNA(Sec), which will be further converted into selenocysteinyl-tRNA(Sec). The polypeptide is Serine--tRNA ligase (Maricaulis maris (strain MCS10) (Caulobacter maris)).